The chain runs to 354 residues: Holliday junction branch migration complex subunit RuvB (354 aa).

The large ATPase domain (RuvB-L) stretch occupies residues 4 to 191 (TDKLAAPARV…FGIVARLEFY (188 aa)). Residues L30, R31, G72, K75, T76, T77, 138-140 (EDY), R181, Y191, and R228 contribute to the ATP site. T76 contacts Mg(2+). Residues 192–262 (TAEELARIVT…MADAALAMLD (71 aa)) are small ATPAse domain (RuvB-S). Positions 265 to 354 (RVGFDLMDRK…GDAGELFGDA (90 aa)) are head domain (RuvB-H). DNA is bound by residues R301, R320, and R325.

It belongs to the RuvB family. As to quaternary structure, homohexamer. Forms an RuvA(8)-RuvB(12)-Holliday junction (HJ) complex. HJ DNA is sandwiched between 2 RuvA tetramers; dsDNA enters through RuvA and exits via RuvB. An RuvB hexamer assembles on each DNA strand where it exits the tetramer. Each RuvB hexamer is contacted by two RuvA subunits (via domain III) on 2 adjacent RuvB subunits; this complex drives branch migration. In the full resolvosome a probable DNA-RuvA(4)-RuvB(12)-RuvC(2) complex forms which resolves the HJ.

Its subcellular location is the cytoplasm. The enzyme catalyses ATP + H2O = ADP + phosphate + H(+). In terms of biological role, the RuvA-RuvB-RuvC complex processes Holliday junction (HJ) DNA during genetic recombination and DNA repair, while the RuvA-RuvB complex plays an important role in the rescue of blocked DNA replication forks via replication fork reversal (RFR). RuvA specifically binds to HJ cruciform DNA, conferring on it an open structure. The RuvB hexamer acts as an ATP-dependent pump, pulling dsDNA into and through the RuvAB complex. RuvB forms 2 homohexamers on either side of HJ DNA bound by 1 or 2 RuvA tetramers; 4 subunits per hexamer contact DNA at a time. Coordinated motions by a converter formed by DNA-disengaged RuvB subunits stimulates ATP hydrolysis and nucleotide exchange. Immobilization of the converter enables RuvB to convert the ATP-contained energy into a lever motion, pulling 2 nucleotides of DNA out of the RuvA tetramer per ATP hydrolyzed, thus driving DNA branch migration. The RuvB motors rotate together with the DNA substrate, which together with the progressing nucleotide cycle form the mechanistic basis for DNA recombination by continuous HJ branch migration. Branch migration allows RuvC to scan DNA until it finds its consensus sequence, where it cleaves and resolves cruciform DNA. This chain is Holliday junction branch migration complex subunit RuvB, found in Cupriavidus taiwanensis (strain DSM 17343 / BCRC 17206 / CCUG 44338 / CIP 107171 / LMG 19424 / R1) (Ralstonia taiwanensis (strain LMG 19424)).